The sequence spans 250 residues: MRLVFTGNCVFKRLLHTEIGGKYAKQQPRNLKGRSKSSQEWLTRQLADPYVEKARMMNYRCRSAFKLLEIDDKYGILRPGDTVLECGAAPGSWTQVAVERTNANGKQERAPQGAVFSIDLLHFHAVPGATIFGGMDFTSSLAQKRLREALQDRKVNCVLSDMAPNATGVRMLDQESITNLCYEVLRFALAMSAPQAHLVVKVWDNGDVPKLERDMLRFYEKVKRVKPRASRGDSAEHFLVARNFKGATDS.

A mitochondrion-targeting transit peptide spans 1–35 (MRLVFTGNCVFKRLLHTEIGGKYAKQQPRNLKGRS). S-adenosyl-L-methionine-binding positions include 90 to 93 (PGSW), Asp-119, 136 to 137 (DF), and Asp-161. The active-site Proton acceptor is Lys-201.

This sequence belongs to the class I-like SAM-binding methyltransferase superfamily. RNA methyltransferase RlmE family.

Its subcellular location is the mitochondrion. The catalysed reaction is a uridine in rRNA + S-adenosyl-L-methionine = a 2'-O-methyluridine in rRNA + S-adenosyl-L-homocysteine + H(+). Functionally, S-adenosyl-L-methionine-dependent 2'-O-ribose methyltransferase that catalyzes the formation of 2'-O-methyluridine at position 1579 (Um1579) in the mitochondrial large subunit ribosomal RNA (mtLSU rRNA), a universally conserved modification in the peptidyl transferase domain of the mtLSU rRNA. This activity may require prior 2'-O-methylguanosine modification at position 1580 (Gm1580) by MRM3. Essential for late-stage assembly of mtLSU required for efficient translation of mitochondrial DNA encoded proteins; methyltransferase activity is not required for this function. Essential for mitochondrial respiratory function. In Drosophila melanogaster (Fruit fly), this protein is rRNA methyltransferase 2, mitochondrial.